The following is a 235-amino-acid chain: Urease accessory protein UreF (235 aa).

It belongs to the UreF family. UreD, UreF and UreG form a complex that acts as a GTP-hydrolysis-dependent molecular chaperone, activating the urease apoprotein by helping to assemble the nickel containing metallocenter of UreC. The UreE protein probably delivers the nickel.

Its subcellular location is the cytoplasm. In terms of biological role, required for maturation of urease via the functional incorporation of the urease nickel metallocenter. The protein is Urease accessory protein UreF of Haemophilus influenzae (strain PittGG).